We begin with the raw amino-acid sequence, 362 residues long: Chorismate synthase (362 aa).

The NADP(+) site is built by arginine 48 and arginine 54. Residues 125-127, 238-239, glycine 278, 293-297, and arginine 319 contribute to the FMN site; these read RSS, NA, and KPTSS.

The protein belongs to the chorismate synthase family. In terms of assembly, homotetramer. FMNH2 is required as a cofactor.

The enzyme catalyses 5-O-(1-carboxyvinyl)-3-phosphoshikimate = chorismate + phosphate. It functions in the pathway metabolic intermediate biosynthesis; chorismate biosynthesis; chorismate from D-erythrose 4-phosphate and phosphoenolpyruvate: step 7/7. In terms of biological role, catalyzes the anti-1,4-elimination of the C-3 phosphate and the C-6 proR hydrogen from 5-enolpyruvylshikimate-3-phosphate (EPSP) to yield chorismate, which is the branch point compound that serves as the starting substrate for the three terminal pathways of aromatic amino acid biosynthesis. This reaction introduces a second double bond into the aromatic ring system. The chain is Chorismate synthase from Psychromonas ingrahamii (strain DSM 17664 / CCUG 51855 / 37).